The chain runs to 132 residues: Ribosome-binding factor A (132 aa).

It belongs to the RbfA family. In terms of assembly, monomer. Binds 30S ribosomal subunits, but not 50S ribosomal subunits or 70S ribosomes.

It is found in the cytoplasm. One of several proteins that assist in the late maturation steps of the functional core of the 30S ribosomal subunit. Associates with free 30S ribosomal subunits (but not with 30S subunits that are part of 70S ribosomes or polysomes). Required for efficient processing of 16S rRNA. May interact with the 5'-terminal helix region of 16S rRNA. The polypeptide is Ribosome-binding factor A (Pasteurella multocida (strain Pm70)).